Here is an 812-residue protein sequence, read N- to C-terminus: MDAELLELQRQLEAAQSARSSVRLSERNVVELVQKLQERGIIDFELLHTTSGKEYITSDHLKHEIKMEIKKRGRASLVDLSDILGVDLYHVERQSQKVVADDPSLMLINGEIMSQSYWDTVTEEINEKLQERSQIALAEIAAQLHIGSELVVNILEPRLGTIVKGRLEGGQLYTPAYVSRITAMVRGAARGITVPTNLPSVWNSLQLQLQEMHGASGVSVEGSFFQSIFNGLLKEGVVLGSVRAGVQWTPAVFAHAQKESVDAFFSQNSYIGYEVLQKLAIPQPKQYLEARYPDGIALEAVFVHPSVVDMLDAAVGDTIENGQWIDALSVLPSYITGPDATKILSLCPSLQKAIKSSKAVVFGESCVFSNAFIKGIFDRLEKEMDSFGIKHSAGQGKPSNMSSEHRIGSDGKDLGDNDTSSIGASSDKGPKKKRGKVSGSAKGAAVEKDDDNEESIPVKGKKAHRKNKDAGSSGDAKHGGKKASEKTKEDNTNIFPDDLIEQKVLTVAPELEELGGSDDLNGPLKLLSSHLRPMLMDAWMKKRNTMLSENAERRRRLLDNLQKQLDEAVLDMQLYEKSLDVFEDDPATSAILHKHLLRTMGAPVVDKILLTLHKDNKLKNGMDVEDSEENVQLSTADRTSLAKDLPGSLSVKAQALAETLEGKRFDSFMDALRDTAEESGLLFKKLDKRLERSMLHSYRKDLTAQVSSENDPISFLPKVVALLFLQAYNKALQAPGRAVGAVIALLKDKIPAPTYKVLADYHSTTVKVLALQAAATEDGEDCATDRMLERKEDLEERLMPELKSLVLGTSKE.

Residues 389 to 495 (IKHSAGQGKP…KTKEDNTNIF (107 aa)) form a disordered region. Composition is skewed to basic and acidic residues over residues 403–415 (SEHRIGSDGKDLG) and 475–491 (DAKHGGKKASEKTKEDN).

This sequence belongs to the UFL1 family.

E3 UFM1-protein ligase that mediates ufmylation of target proteins. This is E3 UFM1-protein ligase 1 homolog from Oryza sativa subsp. indica (Rice).